Consider the following 765-residue polypeptide: Probable dipeptidyl peptidase 4 (765 aa).

The signal sequence occupies residues 1–14; the sequence is MKWSILLLVGCAAA. N35, N78, N101, N110, N169, N218, N465, and N490 each carry an N-linked (GlcNAc...) asparagine glycan. Residue S613 is the Charge relay system of the active site. N665 carries N-linked (GlcNAc...) asparagine glycosylation. Residues D690 and H725 each act as charge relay system in the active site.

Belongs to the peptidase S9B family.

It is found in the secreted. It catalyses the reaction Release of an N-terminal dipeptide, Xaa-Yaa-|-Zaa-, from a polypeptide, preferentially when Yaa is Pro, provided Zaa is neither Pro nor hydroxyproline.. Extracellular dipeptidyl-peptidase which removes N-terminal dipeptides sequentially from polypeptides having unsubstituted N-termini provided that the penultimate residue is proline. Contributes to pathogenicity. This Aspergillus fumigatus (strain ATCC MYA-4609 / CBS 101355 / FGSC A1100 / Af293) (Neosartorya fumigata) protein is Probable dipeptidyl peptidase 4 (dpp4).